A 959-amino-acid chain; its full sequence is Alanine--tRNA ligase (959 aa).

S389 is subject to Phosphoserine. Residues H606, H610, C725, and H729 each contribute to the Zn(2+) site.

This sequence belongs to the class-II aminoacyl-tRNA synthetase family. In terms of assembly, monomer. The cofactor is Zn(2+).

It is found in the mitochondrion. Its subcellular location is the cytoplasm. The enzyme catalyses tRNA(Ala) + L-alanine + ATP = L-alanyl-tRNA(Ala) + AMP + diphosphate. Its function is as follows. Catalyzes the attachment of alanine to tRNA(Ala) in a two-step reaction: alanine is first activated by ATP to form Ala-AMP and then transferred to the acceptor end of tRNA(Ala). Also edits incorrectly charged tRNA(Ala) via its editing domain. This is Alanine--tRNA ligase (ala1) from Schizosaccharomyces pombe (strain 972 / ATCC 24843) (Fission yeast).